We begin with the raw amino-acid sequence, 502 residues long: UDP-N-acetylmuramoylalanine--D-glutamate ligase (502 aa).

129 to 135 contributes to the ATP binding site; sequence GTNGKTT.

The protein belongs to the MurCDEF family.

The protein localises to the cytoplasm. It catalyses the reaction UDP-N-acetyl-alpha-D-muramoyl-L-alanine + D-glutamate + ATP = UDP-N-acetyl-alpha-D-muramoyl-L-alanyl-D-glutamate + ADP + phosphate + H(+). It functions in the pathway cell wall biogenesis; peptidoglycan biosynthesis. Its function is as follows. Cell wall formation. Catalyzes the addition of glutamate to the nucleotide precursor UDP-N-acetylmuramoyl-L-alanine (UMA). This chain is UDP-N-acetylmuramoylalanine--D-glutamate ligase, found in Burkholderia ambifaria (strain MC40-6).